A 380-amino-acid polypeptide reads, in one-letter code: Guanine nucleotide-binding protein subunit beta (380 aa).

WD repeat units follow at residues 64 to 103, 106 to 145, 155 to 195, 203 to 243, 247 to 286, 296 to 335, and 342 to 380; these read GHSG…KTHA, LHCP…DRDG, GHKG…RISI, GHTA…RAVR, GHEG…QLQV, NELP…VVLN, and SHEG…RKIV.

Belongs to the WD repeat G protein beta family. As to quaternary structure, g proteins are composed of 3 units, alpha, beta and gamma. Interacts with the gamma subunits RGG1 and RGG2.

The protein localises to the cell membrane. Guanine nucleotide-binding proteins (G proteins) are involved as modulators or transducers in various transmembrane signaling systems. The beta and gamma chains are required for the GTPase activity, for replacement of GDP by GTP, and for G protein-effector interaction. The sequence is that of Guanine nucleotide-binding protein subunit beta from Oryza sativa subsp. indica (Rice).